Reading from the N-terminus, the 360-residue chain is Metalloendoproteinase 5-MMP (360 aa).

The first 20 residues, 1 to 20 (MRTLLLTILIFFFTVNPISA), serve as a signal peptide directing secretion. The propeptide at 21–142 (KFYTNVSSIP…GGKILRTTEK (122 aa)) is activation peptide. Asn-25, Asn-36, and Asn-78 each carry an N-linked (GlcNAc...) asparagine glycan. Residues 117–124 (PRCGNPDL) carry the Cysteine switch motif. A Zn(2+)-binding site is contributed by Cys-119. 2 N-linked (GlcNAc...) asparagine glycosylation sites follow: Asn-168 and Asn-191. Position 270 (His-270) interacts with Zn(2+). Glu-271 is a catalytic residue. The Zn(2+) site is built by His-274 and His-280. The segment at 312–336 (LYGGNPNGDGGGSKPSRESQSTGGD) is disordered. A lipid anchor (GPI-anchor amidated serine) is attached at Ser-337. The propeptide at 338-360 (VRRWRGWMISLSSIATCIFLISV) is removed in mature form.

The protein belongs to the peptidase M10A family. Matrix metalloproteinases (MMPs) subfamily. Zn(2+) is required as a cofactor. As to expression, mostly expressed in leaves, roots and stems, and, to a lower extent, in flowers.

It localises to the cell membrane. Repressed by acetohydroxamic acid (AHA). Matrix metalloproteinases (MMPs) or matrixins may play a role in the degradation and remodeling of the extracellular matrix (ECM) during development or in response to stresses. Active on Mca-KESAbuNLFVLKDpaR-NH(2) (QF75) and, to some extent, on McaPLGLDpaAR-NH(2) (QF24), myelin basic protein (MBP) and beta-casein. The chain is Metalloendoproteinase 5-MMP from Arabidopsis thaliana (Mouse-ear cress).